The following is a 158-amino-acid chain: Transcription elongation factor GreA (158 aa).

Residues 46-66 (AEYEAAKERQGFIEGRISELE) are a coiled coil.

Belongs to the GreA/GreB family.

In terms of biological role, necessary for efficient RNA polymerase transcription elongation past template-encoded arresting sites. The arresting sites in DNA have the property of trapping a certain fraction of elongating RNA polymerases that pass through, resulting in locked ternary complexes. Cleavage of the nascent transcript by cleavage factors such as GreA or GreB allows the resumption of elongation from the new 3'terminus. GreA releases sequences of 2 to 3 nucleotides. This Neisseria meningitidis serogroup A / serotype 4A (strain DSM 15465 / Z2491) protein is Transcription elongation factor GreA.